Reading from the N-terminus, the 222-residue chain is Proteoglycan 3 (222 aa).

The signal sequence occupies residues 1–17 (MKQPLILSFLLLGMVSA). The segment covering 27–46 (NPKREESLKQEADGSREQGR) has biased composition (basic and acidic residues). The segment at 27-100 (NPKREESLKQ…PKEEDTTHFQ (74 aa)) is disordered. Over residues 71 to 81 (FEDEEAMESDP) the composition is skewed to acidic residues. Residues 83–97 (ALNKDSACPKEEDTT) show a composition bias toward basic and acidic residues. The C-type lectin domain occupies 105 to 221 (CKSCNYVLVR…CKSHLPFICS (117 aa)). Cystine bridges form between C126–C220 and C197–C212.

Expressed in bone marrow, spleen, and thymus. Not detected in heart, liver or lung.

Its function is as follows. Possesses similar cytotoxic and cytostimulatory activities to PRG2/MBP. This chain is Proteoglycan 3, found in Mus musculus (Mouse).